Reading from the N-terminus, the 190-residue chain is Potassium-transporting ATPase KdpC subunit (190 aa).

The chain crosses the membrane as a helical span at residues 10–30; it reads TFLFLLLITGGVYPLLTTALG.

The protein belongs to the KdpC family. The system is composed of three essential subunits: KdpA, KdpB and KdpC.

The protein localises to the cell inner membrane. Part of the high-affinity ATP-driven potassium transport (or Kdp) system, which catalyzes the hydrolysis of ATP coupled with the electrogenic transport of potassium into the cytoplasm. This subunit acts as a catalytic chaperone that increases the ATP-binding affinity of the ATP-hydrolyzing subunit KdpB by the formation of a transient KdpB/KdpC/ATP ternary complex. In Escherichia coli O7:K1 (strain IAI39 / ExPEC), this protein is Potassium-transporting ATPase KdpC subunit.